A 314-amino-acid chain; its full sequence is Small ribosomal subunit protein uS2 (314 aa).

Composition is skewed to basic and acidic residues over residues 244–265 (GGHD…GHKD) and 271–287 (DRRG…EDRA). The tract at residues 244–314 (GGHDERREQE…AAPEAAPAKE (71 aa)) is disordered. Residues 302 to 314 (APAAAPEAAPAKE) show a composition bias toward low complexity.

It belongs to the universal ribosomal protein uS2 family.

The polypeptide is Small ribosomal subunit protein uS2 (Anaeromyxobacter dehalogenans (strain 2CP-C)).